We begin with the raw amino-acid sequence, 129 residues long: Flagellar assembly factor FliW (129 aa).

The protein belongs to the FliW family. In terms of assembly, interacts with translational regulator CsrA and flagellin(s).

The protein localises to the cytoplasm. Functionally, acts as an anti-CsrA protein, binds CsrA and prevents it from repressing translation of its target genes, one of which is flagellin. Binds to flagellin and participates in the assembly of the flagellum. The protein is Flagellar assembly factor FliW of Campylobacter jejuni subsp. doylei (strain ATCC BAA-1458 / RM4099 / 269.97).